We begin with the raw amino-acid sequence, 440 residues long: 5-hydroxytryptamine receptor 6 (440 aa).

The Extracellular portion of the chain corresponds to 1–27; that stretch reads MVPEPGPSANSTPAWGAGPPSAPGGSG. The helical transmembrane segment at 28-52 threads the bilayer; it reads WVAAALCVVIALTAAANSLLIALIC. Over 53–62 the chain is Cytoplasmic; sequence TQPALRNTSN. A helical transmembrane segment spans residues 63 to 88; the sequence is FFLVSLFTSDLMVGLVVMPPAMLNAL. Residues 89-96 lie on the Extracellular side of the membrane; it reads YGRWVLAR. The chain crosses the membrane as a helical span at residues 97 to 122; that stretch reads GLCLLWTAFDVMCCSASILNLCLISL. Cysteine 99 and cysteine 180 are oxidised to a cystine. Aspartate 106 provides a ligand contact to serotonin. Over 123-142 the chain is Cytoplasmic; that stretch reads DRYLLILSPLRYKLRMTPPR. Residues 143 to 167 form a helical membrane-spanning segment; sequence ALALVLGAWSLAALASFLPLLLGWH. Residues 168–185 are Extracellular-facing; it reads ELGHARPPVPGQCRLLAS. Residues 186 to 209 form a helical membrane-spanning segment; that stretch reads LPFVLVASGLTFFLPSGAICFTYC. Residues 210–266 lie on the Cytoplasmic side of the membrane; sequence RILLAARKQAVQVASLTTGMASQASETLQVPRTPRPGVESADSRRLATKHSRKALKA. The chain crosses the membrane as a helical span at residues 267-293; the sequence is SLTLGILLGMFFVTWLPFFVANIVQAV. Serotonin is bound at residue asparagine 288. At 294–299 the chain is on the extracellular side; the sequence is CDCISP. Residues 300–323 traverse the membrane as a helical segment; the sequence is GLFDVLTWLGYCNSTMNPIIYPLF. Over 324–440 the chain is Cytoplasmic; that stretch reads MRDFKRALGR…RPHPLGIPTN (117 aa). The segment at 346–392 is disordered; that stretch reads ASLASPSLRTSHSGPRPGLSLQQVLPLPLPPDSDSDSDAGSGGSSGL. Polar residues predominate over residues 347-358; sequence SLASPSLRTSHS. Low complexity predominate over residues 362–371; that stretch reads PGLSLQQVLP.

Belongs to the G-protein coupled receptor 1 family. As to quaternary structure, interacts with MTOR, RPTOR and NF1. Interacts with CDK5.

The protein resides in the cell membrane. G-protein coupled receptor for 5-hydroxytryptamine (serotonin), a biogenic hormone that functions as a neurotransmitter, a hormone and a mitogen. Also has a high affinity for tricyclic psychotropic drugs. Ligand binding causes a conformation change that triggers signaling via guanine nucleotide-binding proteins (G proteins) and modulates the activity of downstream effectors. HTR6 is coupled to G(s) G alpha proteins and mediates activation of adenylate cyclase activity. Controls pyramidal neurons migration during corticogenesis, through the regulation of CDK5 activity. Is an activator of mTOR signaling. This Pan troglodytes (Chimpanzee) protein is 5-hydroxytryptamine receptor 6 (HTR6).